Consider the following 874-residue polypeptide: Leucine--tRNA ligase (874 aa).

The 'HIGH' region signature appears at 43–53; it reads PYPSGRIHIGH. Residues 614 to 634 form a disordered region; the sequence is LDDGSPVTVGPPEKMSKSKKN. A 'KMSKS' region motif is present at residues 627–631; that stretch reads KMSKS. Lysine 630 serves as a coordination point for ATP.

This sequence belongs to the class-I aminoacyl-tRNA synthetase family.

Its subcellular location is the cytoplasm. It carries out the reaction tRNA(Leu) + L-leucine + ATP = L-leucyl-tRNA(Leu) + AMP + diphosphate. The chain is Leucine--tRNA ligase from Azorhizobium caulinodans (strain ATCC 43989 / DSM 5975 / JCM 20966 / LMG 6465 / NBRC 14845 / NCIMB 13405 / ORS 571).